Consider the following 420-residue polypeptide: MVAVVRSLMVLLLAQVLLEGATGLIPEVGRRRYSESGKQSPQQSEGFLNEFELRLLNMFGLKRRPTPSKQAVVPQYMVDLYRMHSANGDHSAKRPKSMGRHAERAASKANTIRSFHHEESMEALARLKGKTTQQFYFNLTSIPKEELITSAELRIYRDQVMGAASTNNSSTNSSTSDKAHAGGFHRINIYEIFGVPQGREPLARLLDTRLVQDSLTRWESFDVSSAVFQWTSGKGHNHGFMIEVLHPEEGEVEQERADKHSRHVRVSRSLHQDRDSWPQARPLLVTYGHDGRGDSVLHTREKRQAALRKQRRKHQHKASCKRHALYVDFSDVGWNEWIVAPPGYHAFYCQGECPFPLADHLNSTNHAIVQTLVNSVNSNIPRACCVPTDLSPISLLYLDEYEKVILKNYQDMVVEGCGCR.

Residues 1-23 (MVAVVRSLMVLLLAQVLLEGATG) form the signal peptide. A propeptide spanning residues 24 to 303 (LIPEVGRRRY…DSVLHTREKR (280 aa)) is cleaved from the precursor. N-linked (GlcNAc...) asparagine glycans are attached at residues Asn-138, Asn-167, Asn-168, Asn-172, and Asn-362. Disulfide bonds link Cys-320–Cys-385, Cys-349–Cys-417, and Cys-353–Cys-419.

Belongs to the TGF-beta family. Homodimer; disulfide-linked.

The protein localises to the secreted. Functionally, induces cartilage and bone formation. The polypeptide is Bone morphogenetic protein 2 (bmp2) (Tetraodon nigroviridis (Spotted green pufferfish)).